The sequence spans 63 residues: Large ribosomal subunit protein bL28 (63 aa).

The segment at 1–20 (MSKRCAITGKGPMVGNNVSH) is disordered.

This sequence belongs to the bacterial ribosomal protein bL28 family.

The protein is Large ribosomal subunit protein bL28 of Campylobacter fetus subsp. fetus (strain 82-40).